Consider the following 205-residue polypeptide: Transcriptional regulator GfcR (205 aa).

This sequence belongs to the purine/pyrimidine phosphoribosyltransferase family. GfcR subfamily.

The chain is Transcriptional regulator GfcR from Methanococcus maripaludis (strain DSM 14266 / JCM 13030 / NBRC 101832 / S2 / LL).